Consider the following 109-residue polypeptide: Large ribosomal subunit protein uL24 (109 aa).

The protein belongs to the universal ribosomal protein uL24 family. In terms of assembly, part of the 50S ribosomal subunit.

In terms of biological role, one of two assembly initiator proteins, it binds directly to the 5'-end of the 23S rRNA, where it nucleates assembly of the 50S subunit. Functionally, one of the proteins that surrounds the polypeptide exit tunnel on the outside of the subunit. In Legionella pneumophila (strain Paris), this protein is Large ribosomal subunit protein uL24.